We begin with the raw amino-acid sequence, 309 residues long: tRNA dimethylallyltransferase (309 aa).

An ATP-binding site is contributed by 14-21 (GPTASGKS). 16-21 (TASGKS) lines the substrate pocket. Residues 39–42 (DSMQ) are interaction with substrate tRNA.

The protein belongs to the IPP transferase family. In terms of assembly, monomer. The cofactor is Mg(2+).

The catalysed reaction is adenosine(37) in tRNA + dimethylallyl diphosphate = N(6)-dimethylallyladenosine(37) in tRNA + diphosphate. Its function is as follows. Catalyzes the transfer of a dimethylallyl group onto the adenine at position 37 in tRNAs that read codons beginning with uridine, leading to the formation of N6-(dimethylallyl)adenosine (i(6)A). In Geobacter metallireducens (strain ATCC 53774 / DSM 7210 / GS-15), this protein is tRNA dimethylallyltransferase.